A 313-amino-acid polypeptide reads, in one-letter code: Malate dehydrogenase (313 aa).

NAD(+) is bound by residues 11–16 (GAGNIG) and aspartate 35. Substrate is bound by residues arginine 84 and arginine 90. NAD(+) contacts are provided by residues asparagine 97 and 120–122 (VTN). Substrate contacts are provided by asparagine 122 and arginine 153. Catalysis depends on histidine 177, which acts as the Proton acceptor.

Belongs to the LDH/MDH superfamily. MDH type 3 family.

The enzyme catalyses (S)-malate + NAD(+) = oxaloacetate + NADH + H(+). In terms of biological role, catalyzes the reversible oxidation of malate to oxaloacetate. The sequence is that of Malate dehydrogenase from Ehrlichia canis (strain Jake).